Consider the following 373-residue polypeptide: 4-hydroxy-3-methylbut-2-en-1-yl diphosphate synthase (flavodoxin) (373 aa).

Residues Cys-270, Cys-273, Cys-305, and Glu-312 each coordinate [4Fe-4S] cluster.

The protein belongs to the IspG family. [4Fe-4S] cluster serves as cofactor.

It carries out the reaction (2E)-4-hydroxy-3-methylbut-2-enyl diphosphate + oxidized [flavodoxin] + H2O + 2 H(+) = 2-C-methyl-D-erythritol 2,4-cyclic diphosphate + reduced [flavodoxin]. Its pathway is isoprenoid biosynthesis; isopentenyl diphosphate biosynthesis via DXP pathway; isopentenyl diphosphate from 1-deoxy-D-xylulose 5-phosphate: step 5/6. Its function is as follows. Converts 2C-methyl-D-erythritol 2,4-cyclodiphosphate (ME-2,4cPP) into 1-hydroxy-2-methyl-2-(E)-butenyl 4-diphosphate. This is 4-hydroxy-3-methylbut-2-en-1-yl diphosphate synthase (flavodoxin) from Sodalis glossinidius (strain morsitans).